The sequence spans 680 residues: tRNA 5-methylaminomethyl-2-thiouridine biosynthesis bifunctional protein MnmC (680 aa).

Residues 1 to 267 (MTAEPNKPCQ…MAAILSSDAP (267 aa)) form a tRNA (mnm(5)s(2)U34)-methyltransferase region. Residues 273 to 680 (IGGGLASAHL…LRKLLKGKAL (408 aa)) are FAD-dependent cmnm(5)s(2)U34 oxidoreductase.

It in the N-terminal section; belongs to the methyltransferase superfamily. tRNA (mnm(5)s(2)U34)-methyltransferase family. This sequence in the C-terminal section; belongs to the DAO family. FAD is required as a cofactor.

It localises to the cytoplasm. It catalyses the reaction 5-aminomethyl-2-thiouridine(34) in tRNA + S-adenosyl-L-methionine = 5-methylaminomethyl-2-thiouridine(34) in tRNA + S-adenosyl-L-homocysteine + H(+). Its function is as follows. Catalyzes the last two steps in the biosynthesis of 5-methylaminomethyl-2-thiouridine (mnm(5)s(2)U) at the wobble position (U34) in tRNA. Catalyzes the FAD-dependent demodification of cmnm(5)s(2)U34 to nm(5)s(2)U34, followed by the transfer of a methyl group from S-adenosyl-L-methionine to nm(5)s(2)U34, to form mnm(5)s(2)U34. The polypeptide is tRNA 5-methylaminomethyl-2-thiouridine biosynthesis bifunctional protein MnmC (Shewanella putrefaciens (strain CN-32 / ATCC BAA-453)).